A 65-amino-acid chain; its full sequence is MDNLYSQINSEININVLKLCRLISKNFNNGPEPKELYKLWIDALPKEVTEDFVIEESKPETNLDD.

This is an uncharacterized protein from Invertebrate iridescent virus 6 (IIV-6).